A 57-amino-acid polypeptide reads, in one-letter code: Large ribosomal subunit protein uL30 (57 aa).

This sequence belongs to the universal ribosomal protein uL30 family. As to quaternary structure, part of the 50S ribosomal subunit.

This Maridesulfovibrio salexigens (strain ATCC 14822 / DSM 2638 / NCIMB 8403 / VKM B-1763) (Desulfovibrio salexigens) protein is Large ribosomal subunit protein uL30.